The sequence spans 421 residues: D-amino acid dehydrogenase (421 aa).

Residue 3-17 participates in FAD binding; that stretch reads VLVLGGGVVGVTSAY.

This sequence belongs to the DadA oxidoreductase family. Requires FAD as cofactor.

The catalysed reaction is a D-alpha-amino acid + A + H2O = a 2-oxocarboxylate + AH2 + NH4(+). Its pathway is amino-acid degradation; D-alanine degradation; NH(3) and pyruvate from D-alanine: step 1/1. In terms of biological role, oxidative deamination of D-amino acids. The chain is D-amino acid dehydrogenase from Methylobacterium sp. (strain 4-46).